We begin with the raw amino-acid sequence, 126 residues long: Histone H2B type 1-K (126 aa).

The segment covering 1-12 (MPEPAKSAPAPK) has biased composition (low complexity). Residues 1–36 (MPEPAKSAPAPKKGSKKAVTKAQKIDGKKRKRSRKE) form a disordered region. Residue proline 2 is modified to N-acetylproline. An ADP-ribosyl glutamic acid modification is found at glutamate 3. Lysine 6 carries the N6-(2-hydroxyisobutyryl)lysine; alternate modification. N6-(beta-hydroxybutyryl)lysine; alternate is present on lysine 6. Lysine 6 is modified (N6-acetyllysine; alternate). Lysine 6 carries the N6-butyryllysine; alternate modification. Lysine 6 carries the N6-crotonyllysine; alternate modification. Lysine 6 carries the post-translational modification N6-lactoyllysine; alternate. A Glycyl lysine isopeptide (Lys-Gly) (interchain with G-Cter in SUMO2); alternate cross-link involves residue lysine 6. Serine 7 bears the ADP-ribosylserine mark. Lysine 12 carries the post-translational modification N6-(beta-hydroxybutyryl)lysine; alternate. N6-acetyllysine; alternate occurs at positions 12 and 13. Lysine 12 and lysine 13 each carry N6-crotonyllysine; alternate. The residue at position 12 (lysine 12) is an N6-lactoyllysine; alternate. The residue at position 13 (lysine 13) is an N6-(2-hydroxyisobutyryl)lysine; alternate. Phosphoserine; by STK4/MST1 is present on serine 15. N6-acetyllysine; alternate occurs at positions 16, 17, 21, and 24. N6-crotonyllysine; alternate occurs at positions 16, 17, 21, 24, and 35. 4 positions are modified to N6-lactoyllysine; alternate: lysine 16, lysine 17, lysine 21, and lysine 24. Lysine 17 is modified (N6-glutaryllysine; alternate). N6-(2-hydroxyisobutyryl)lysine; alternate is present on residues lysine 21, lysine 24, and lysine 35. At lysine 21 the chain carries N6-(beta-hydroxybutyryl)lysine; alternate. The residue at position 21 (lysine 21) is an N6-butyryllysine; alternate. A Glycyl lysine isopeptide (Lys-Gly) (interchain with G-Cter in SUMO2); alternate cross-link involves residue lysine 21. Position 35 is an N6-(beta-hydroxybutyryl)lysine; alternate (lysine 35). Residue lysine 35 is modified to N6-glutaryllysine; alternate. An N6-succinyllysine; alternate modification is found at lysine 35. Lysine 35 participates in a covalent cross-link: Glycyl lysine isopeptide (Lys-Gly) (interchain with G-Cter in ubiquitin); alternate. Glutamate 36 carries the polyADP-ribosyl glutamic acid modification. The residue at position 37 (serine 37) is a Phosphoserine; by AMPK. Lysine 44, lysine 47, and lysine 58 each carry N6-(2-hydroxyisobutyryl)lysine; alternate. N6-lactoyllysine; alternate is present on lysine 44. Lysine 44 and lysine 47 each carry N6-glutaryllysine; alternate. Lysine 47 bears the N6-methyllysine; alternate mark. An N6,N6-dimethyllysine; alternate modification is found at lysine 58. Arginine 80 bears the Dimethylated arginine mark. Position 86 is an N6-(2-hydroxyisobutyryl)lysine; alternate (lysine 86). Lysine 86 carries the post-translational modification N6-acetyllysine; alternate. At lysine 86 the chain carries N6-lactoyllysine; alternate. Residue lysine 86 is modified to N6,N6,N6-trimethyllysine; alternate. Arginine 87 and arginine 93 each carry omega-N-methylarginine. Lysine 109 carries the N6-(2-hydroxyisobutyryl)lysine; alternate modification. The residue at position 109 (lysine 109) is an N6-lactoyllysine; alternate. At lysine 109 the chain carries N6-glutaryllysine; alternate. Lysine 109 is modified (N6-methyllysine; alternate). O-linked (GlcNAc) serine glycosylation occurs at serine 113. The residue at position 116 (threonine 116) is a Phosphothreonine. 2 positions are modified to N6-(2-hydroxyisobutyryl)lysine; alternate: lysine 117 and lysine 121. Lysine 117 carries the post-translational modification N6-(beta-hydroxybutyryl)lysine; alternate. An N6-lactoyllysine; alternate mark is found at lysine 117 and lysine 121. An N6-glutaryllysine; alternate mark is found at lysine 117 and lysine 121. 2 positions are modified to N6-succinyllysine; alternate: lysine 117 and lysine 121. Lysine 117 carries the N6-methylated lysine; alternate modification. Lysine 121 participates in a covalent cross-link: Glycyl lysine isopeptide (Lys-Gly) (interchain with G-Cter in ubiquitin); alternate.

Belongs to the histone H2B family. As to quaternary structure, the nucleosome is a histone octamer containing two molecules each of H2A, H2B, H3 and H4 assembled in one H3-H4 heterotetramer and two H2A-H2B heterodimers. The octamer wraps approximately 147 bp of DNA. In terms of processing, monoubiquitination at Lys-35 (H2BK34Ub) by the MSL1/MSL2 dimer is required for histone H3 'Lys-4' (H3K4me) and 'Lys-79' (H3K79me) methylation and transcription activation at specific gene loci, such as HOXA9 and MEIS1 loci. Similarly, monoubiquitination at Lys-121 (H2BK120Ub) by the RNF20/40 complex gives a specific tag for epigenetic transcriptional activation and is also prerequisite for histone H3 'Lys-4' and 'Lys-79' methylation. It also functions cooperatively with the FACT dimer to stimulate elongation by RNA polymerase II. H2BK120Ub also acts as a regulator of mRNA splicing: deubiquitination by USP49 is required for efficient cotranscriptional splicing of a large set of exons. Phosphorylated on Ser-15 (H2BS14ph) by STK4/MST1 during apoptosis; which facilitates apoptotic chromatin condensation. Also phosphorylated on Ser-15 in response to DNA double strand breaks (DSBs), and in correlation with somatic hypermutation and immunoglobulin class-switch recombination. Phosphorylation at Ser-37 (H2BS36ph) by AMPK in response to stress promotes transcription. Post-translationally, glcNAcylation at Ser-113 promotes monoubiquitination of Lys-121. It fluctuates in response to extracellular glucose, and associates with transcribed genes. In terms of processing, ADP-ribosylated by PARP1 or PARP2 on Ser-7 (H2BS6ADPr) in response to DNA damage. H2BS6ADPr promotes recruitment of CHD1L. Mono-ADP-ribosylated on Glu-3 (H2BE2ADPr) by PARP3 in response to single-strand breaks. Poly ADP-ribosylation on Glu-36 (H2BE35ADPr) by PARP1 regulates adipogenesis: it inhibits phosphorylation at Ser-37 (H2BS36ph), thereby blocking expression of pro-adipogenetic genes. Crotonylation (Kcr) is specifically present in male germ cells and marks testis-specific genes in post-meiotic cells, including X-linked genes that escape sex chromosome inactivation in haploid cells. Crotonylation marks active promoters and enhancers and confers resistance to transcriptional repressors. It is also associated with post-meiotically activated genes on autosomes. Post-translationally, lactylated in macrophages by EP300/P300 by using lactoyl-CoA directly derived from endogenous or exogenous lactate, leading to stimulates gene transcription.

It is found in the nucleus. The protein localises to the chromosome. Its function is as follows. Core component of nucleosome. Nucleosomes wrap and compact DNA into chromatin, limiting DNA accessibility to the cellular machineries which require DNA as a template. Histones thereby play a central role in transcription regulation, DNA repair, DNA replication and chromosomal stability. DNA accessibility is regulated via a complex set of post-translational modifications of histones, also called histone code, and nucleosome remodeling. This chain is Histone H2B type 1-K, found in Bos taurus (Bovine).